Reading from the N-terminus, the 1450-residue chain is M-protein, striated muscle (1450 aa).

Residues Ala66 to Glu87 are disordered. Ig-like C2-type domains follow at residues Pro142–Val233 and Pro254–Phe359. 5 Fibronectin type-III domains span residues Ala373–Pro468, Pro501–Ile596, Ala602–Ala695, Cys698–Glu800, and Pro803–Gly900. Ig-like C2-type domains follow at residues Pro899–Leu995, Pro1002–Lys1115, Pro1118–Ser1204, Pro1225–Lys1322, and Lys1333–Ser1422.

In terms of tissue distribution, expressed in pectoralis and cardiac muscle.

Is a structural constituent of myofibrillar M-band in striated muscle. This Gallus gallus (Chicken) protein is M-protein, striated muscle.